Here is a 423-residue protein sequence, read N- to C-terminus: Serine--tRNA ligase (423 aa).

L-serine is bound at residue Thr-231 to Glu-233. ATP is bound at residue Arg-262 to Glu-264. Residue Glu-285 coordinates L-serine. Glu-349–Ser-352 lines the ATP pocket. Residue Ser-384 participates in L-serine binding.

Belongs to the class-II aminoacyl-tRNA synthetase family. Type-1 seryl-tRNA synthetase subfamily. Homodimer. The tRNA molecule binds across the dimer.

It is found in the cytoplasm. The catalysed reaction is tRNA(Ser) + L-serine + ATP = L-seryl-tRNA(Ser) + AMP + diphosphate + H(+). The enzyme catalyses tRNA(Sec) + L-serine + ATP = L-seryl-tRNA(Sec) + AMP + diphosphate + H(+). The protein operates within aminoacyl-tRNA biosynthesis; selenocysteinyl-tRNA(Sec) biosynthesis; L-seryl-tRNA(Sec) from L-serine and tRNA(Sec): step 1/1. Functionally, catalyzes the attachment of serine to tRNA(Ser). Is also able to aminoacylate tRNA(Sec) with serine, to form the misacylated tRNA L-seryl-tRNA(Sec), which will be further converted into selenocysteinyl-tRNA(Sec). The protein is Serine--tRNA ligase of Lactococcus lactis subsp. lactis (strain IL1403) (Streptococcus lactis).